We begin with the raw amino-acid sequence, 208 residues long: MIERTFVKENVKRLLIDEYFKKELSKAGYSHCDIRKTPIGTKIIIYAEKPGFVIGRRGSRIRELTETLAKEFGVEKPQIDVKPVENPDLDAQVVAQKVAQSLERGLHFRRVGHTAVRRVMNAGAKGVIVIISGKLTGERARTEKFMAGYMKHCGEPAEELVDKGRAIAKTKPGVIGVTVKIMRPDVLLPDEIIIKEDAEVKHVVEEEQ.

The KH type-2 domain occupies 16 to 85; that stretch reads IDEYFKKELS…KPQIDVKPVE (70 aa).

Belongs to the universal ribosomal protein uS3 family. As to quaternary structure, part of the 30S ribosomal subunit.

In terms of biological role, binds the lower part of the 30S subunit head. The chain is Small ribosomal subunit protein uS3 from Methanocaldococcus jannaschii (strain ATCC 43067 / DSM 2661 / JAL-1 / JCM 10045 / NBRC 100440) (Methanococcus jannaschii).